A 353-amino-acid chain; its full sequence is Photosystem II D2 protein (353 aa).

T2 is modified (N-acetylthreonine). At T2 the chain carries Phosphothreonine. The chain crosses the membrane as a helical span at residues 41-61 (CAYFALGGWFTGTTFVTSWYT). Chlorophyll a is bound at residue H118. A helical transmembrane segment spans residues 125–141 (GFMLRQFELARSVQLRP). The pheophytin a site is built by Q130 and N143. A helical transmembrane segment spans residues 153–166 (VFVSVFLIYPLGQS). H198 is a chlorophyll a binding site. The helical transmembrane segment at 208 to 228 (AALLCAIHGATVENTLFEDGD) threads the bilayer. A plastoquinone contacts are provided by H215 and F262. H215 is a Fe cation binding site. H269 provides a ligand contact to Fe cation. A helical membrane pass occupies residues 279–295 (GLWMSALGVVGLALNLR).

The protein belongs to the reaction center PufL/M/PsbA/D family. In terms of assembly, PSII is composed of 1 copy each of membrane proteins PsbA, PsbB, PsbC, PsbD, PsbE, PsbF, PsbH, PsbI, PsbJ, PsbK, PsbL, PsbM, PsbT, PsbX, PsbY, PsbZ, Psb30/Ycf12, at least 3 peripheral proteins of the oxygen-evolving complex and a large number of cofactors. It forms dimeric complexes. The cofactor is The D1/D2 heterodimer binds P680, chlorophylls that are the primary electron donor of PSII, and subsequent electron acceptors. It shares a non-heme iron and each subunit binds pheophytin, quinone, additional chlorophylls, carotenoids and lipids. There is also a Cl(-1) ion associated with D1 and D2, which is required for oxygen evolution. The PSII complex binds additional chlorophylls, carotenoids and specific lipids..

The protein resides in the plastid. Its subcellular location is the chloroplast thylakoid membrane. The enzyme catalyses 2 a plastoquinone + 4 hnu + 2 H2O = 2 a plastoquinol + O2. Functionally, photosystem II (PSII) is a light-driven water:plastoquinone oxidoreductase that uses light energy to abstract electrons from H(2)O, generating O(2) and a proton gradient subsequently used for ATP formation. It consists of a core antenna complex that captures photons, and an electron transfer chain that converts photonic excitation into a charge separation. The D1/D2 (PsbA/PsbD) reaction center heterodimer binds P680, the primary electron donor of PSII as well as several subsequent electron acceptors. D2 is needed for assembly of a stable PSII complex. This Ranunculus macranthus (Large buttercup) protein is Photosystem II D2 protein.